Consider the following 299-residue polypeptide: ATP phosphoribosyltransferase (299 aa).

The protein belongs to the ATP phosphoribosyltransferase family. Long subfamily. As to quaternary structure, equilibrium between an active dimeric form, an inactive hexameric form and higher aggregates. Interconversion between the various forms is largely reversible and is influenced by the natural substrates and inhibitors of the enzyme. The cofactor is Mg(2+).

The protein localises to the cytoplasm. It catalyses the reaction 1-(5-phospho-beta-D-ribosyl)-ATP + diphosphate = 5-phospho-alpha-D-ribose 1-diphosphate + ATP. It functions in the pathway amino-acid biosynthesis; L-histidine biosynthesis; L-histidine from 5-phospho-alpha-D-ribose 1-diphosphate: step 1/9. Feedback inhibited by histidine. Its function is as follows. Catalyzes the condensation of ATP and 5-phosphoribose 1-diphosphate to form N'-(5'-phosphoribosyl)-ATP (PR-ATP). Has a crucial role in the pathway because the rate of histidine biosynthesis seems to be controlled primarily by regulation of HisG enzymatic activity. This is ATP phosphoribosyltransferase from Escherichia fergusonii (strain ATCC 35469 / DSM 13698 / CCUG 18766 / IAM 14443 / JCM 21226 / LMG 7866 / NBRC 102419 / NCTC 12128 / CDC 0568-73).